Here is a 352-residue protein sequence, read N- to C-terminus: Zinc finger protein 185 (352 aa).

Disordered stretches follow at residues 1-73 (MTTE…ELQS) and 86-121 (DVLP…ITPP). At S18 the chain carries Phosphoserine. The segment covering 61 to 72 (KKTTSSPTQELQ) has biased composition (polar residues). Position 137 is a phosphothreonine (T137). Polar residues predominate over residues 251-268 (VSSGKPVSSHCDSPSSIE). Positions 251–287 (VSSGKPVSSHCDSPSSIEDSLDLAKKPPHEGTPSERP) are disordered. Residues 272–287 (DLAKKPPHEGTPSERP) are compositionally biased toward basic and acidic residues. In terms of domain architecture, LIM zinc-binding spans 292–347 (CTYCSHEIQDCPKITLEHLGICCHEYCFKCGICNKPMGDLLDQIFIHRDTIHCGKC).

In terms of tissue distribution, expressed in skin, kidney, ovary, testis. Also expressed in brain, cartilage, heart, lung, spleen and thymus.

The protein resides in the cytoplasm. The protein localises to the cytoskeleton. Its subcellular location is the cell junction. It localises to the focal adhesion. Functionally, may be involved in the regulation of cellular proliferation and/or differentiation. This chain is Zinc finger protein 185 (Znf185), found in Mus musculus (Mouse).